Reading from the N-terminus, the 729-residue chain is Leucine-rich repeat flightless-interacting protein 2 (729 aa).

The stretch at 27 to 69 forms a coiled coil; that stretch reads IAREAEARLAAKRAARAEARDIRMRELERQQKELTHRYHDKKW. Disordered stretches follow at residues 80 to 156, 230 to 268, and 289 to 344; these read DHAR…SSSH, SARS…ESAA, and IPDL…CSLD. Residues 84-93 are compositionally biased toward basic residues; that stretch reads HLQRSSHRHS. Polar residues predominate over residues 99-110; sequence VTPNHRSSSVDV. The segment covering 115-126 has biased composition (basic and acidic residues); sequence RGRESISRRRDS. Composition is skewed to low complexity over residues 137 to 147 and 257 to 268; these read RTSNSYSNSYD and SSDFSDQSESAA. Residues 304-320 are compositionally biased toward polar residues; the sequence is TTENYSRPSSRNATSGI. Coiled coils occupy residues 357-531 and 574-722; these read DLKD…IGEK and LDVR…KANR. Residues 600 to 621 are disordered; the sequence is DDERQKSAKNNSTTTDPTGLEN. A compositionally biased stretch (polar residues) spans 607-616; sequence AKNNSTTTDP.

It belongs to the LRRFIP family.

May function as activator of the canonical Wnt signaling pathway upstream of ctnnb1/beta-catenin. Might be required for dorsal axis formation. This is Leucine-rich repeat flightless-interacting protein 2 (lrrfip2) from Xenopus laevis (African clawed frog).